Reading from the N-terminus, the 302-residue chain is Putative gluconeogenesis factor (302 aa).

Belongs to the gluconeogenesis factor family.

The protein resides in the cytoplasm. Required for morphogenesis under gluconeogenic growth conditions. The polypeptide is Putative gluconeogenesis factor (ybhK) (Salmonella typhi).